Here is a 328-residue protein sequence, read N- to C-terminus: Sulfate adenylyltransferase subunit 2 (328 aa).

Disordered stretches follow at residues 15–34 (AAPD…PSSH) and 304–328 (SERE…EGYF).

Belongs to the PAPS reductase family. CysD subfamily. As to quaternary structure, heterodimer composed of CysD, the smaller subunit, and CysN.

It carries out the reaction sulfate + ATP + H(+) = adenosine 5'-phosphosulfate + diphosphate. The protein operates within sulfur metabolism; hydrogen sulfide biosynthesis; sulfite from sulfate: step 1/3. With CysN forms the ATP sulfurylase (ATPS) that catalyzes the adenylation of sulfate producing adenosine 5'-phosphosulfate (APS) and diphosphate, the first enzymatic step in sulfur assimilation pathway. APS synthesis involves the formation of a high-energy phosphoric-sulfuric acid anhydride bond driven by GTP hydrolysis by CysN coupled to ATP hydrolysis by CysD. In Rhodopseudomonas palustris (strain BisA53), this protein is Sulfate adenylyltransferase subunit 2.